The following is an 835-amino-acid chain: Telomere length regulation protein TEL2 homolog (835 aa).

Disordered regions lie at residues 455-501 (SADC…LAPY) and 629-648 (LSHE…HSIR). Over residues 464–473 (ESSPSKSCPK) the composition is skewed to low complexity. Residues 474-486 (AIEKSKMEAKADQ) show a composition bias toward basic and acidic residues. The segment covering 488–499 (SDSELDSDDDLA) has biased composition (acidic residues). A compositionally biased stretch (polar residues) spans 636 to 648 (ESRSTGTGQHSIR).

Belongs to the TEL2 family.

The protein localises to the cytoplasm. It is found in the membrane. The protein resides in the nucleus. It localises to the chromosome. Its subcellular location is the telomere. Functionally, regulator of the DNA damage response (DDR). Part of the TTT complex that is required to stabilize protein levels of the phosphatidylinositol 3-kinase-related protein kinase (PIKK) family proteins. Promotes assembly, stabilizes and maintains the activity of TORC complexes, which regulate cell growth and survival in response to nutrient and hormonal signals. May be involved in telomere length regulation. In Xenopus laevis (African clawed frog), this protein is Telomere length regulation protein TEL2 homolog (telo2).